We begin with the raw amino-acid sequence, 451 residues long: Serine/threonine-protein kinase VRK3 (451 aa).

2 disordered regions span residues 28–61 (KHEGSQSFVKPFTSSSQGSRRKTNTSSETSSKKV) and 74–125 (LPSE…MTAS). Residues 32–45 (SQSFVKPFTSSSQG) show a composition bias toward polar residues. Residues 47–62 (RRKTNTSSETSSKKVK) carry the Nuclear localization signal motif. Serine 53, serine 57, serine 80, serine 81, serine 88, and serine 106 each carry phosphoserine. Polar residues predominate over residues 78–91 (GKSSGSEDTLSTSG). Positions 98 to 116 (SRSPTPRSSPQTTRQSPQT) are enriched in low complexity. A Protein kinase domain is found at 123-434 (TASLEALPVG…TLRNELEALL (312 aa)).

This sequence belongs to the protein kinase superfamily. CK1 Ser/Thr protein kinase family. VRK subfamily. Interacts with DUSP3. Interacts with RAN. Interacts with HSP70/HSPA1A. In terms of processing, phosphorylated at Ser-106 by CDK5; leading to protection of the cell against H2O2-induced apoptosis. Ubiquitinated by RNF144A.

The protein resides in the nucleus. It is found in the cytoplasm. The enzyme catalyses L-seryl-[protein] + ATP = O-phospho-L-seryl-[protein] + ADP + H(+). Functionally, plays a role in the regulation of the cell cycle by phosphorylating the nuclear envelope protein barrier-to-autointegration factor/BAF that is required for disassembly and reassembly, respectively, of the nuclear envelope during mitosis. Under normal physiological conditions, negatively regulates ERK activity along with VHR phosphatase in the nucleus, causing timely and transient action of ERK. Stress conditions activate CDK5 which phosphorylates VRK3 to increase VHR phosphatase activity and suppress prolonged ERK activation that causes cell death. For example, upon glutamate induction, promotes nuclear localization of HSP70/HSPA1A to inhibit ERK activation via VHR phosphatase. The protein is Serine/threonine-protein kinase VRK3 (VRK3) of Bos taurus (Bovine).